The following is a 360-amino-acid chain: 3-isopropylmalate dehydrogenase (360 aa).

76-89 (GPKWDKIERDIRPE) is a binding site for NAD(+). The substrate site is built by R96, R106, R134, and D224. 3 residues coordinate Mg(2+): D224, D248, and D252. 282–294 (GSAPDIAGQGIAN) contributes to the NAD(+) binding site.

This sequence belongs to the isocitrate and isopropylmalate dehydrogenases family. LeuB type 1 subfamily. In terms of assembly, homodimer. Mg(2+) serves as cofactor. It depends on Mn(2+) as a cofactor.

The protein localises to the cytoplasm. The enzyme catalyses (2R,3S)-3-isopropylmalate + NAD(+) = 4-methyl-2-oxopentanoate + CO2 + NADH. The protein operates within amino-acid biosynthesis; L-leucine biosynthesis; L-leucine from 3-methyl-2-oxobutanoate: step 3/4. Its function is as follows. Catalyzes the oxidation of 3-carboxy-2-hydroxy-4-methylpentanoate (3-isopropylmalate) to 3-carboxy-4-methyl-2-oxopentanoate. The product decarboxylates to 4-methyl-2 oxopentanoate. This chain is 3-isopropylmalate dehydrogenase, found in Pseudomonas fluorescens (strain ATCC BAA-477 / NRRL B-23932 / Pf-5).